We begin with the raw amino-acid sequence, 410 residues long: Gamma-glutamyl phosphate reductase (410 aa).

It belongs to the gamma-glutamyl phosphate reductase family.

Its subcellular location is the cytoplasm. It carries out the reaction L-glutamate 5-semialdehyde + phosphate + NADP(+) = L-glutamyl 5-phosphate + NADPH + H(+). Its pathway is amino-acid biosynthesis; L-proline biosynthesis; L-glutamate 5-semialdehyde from L-glutamate: step 2/2. Its function is as follows. Catalyzes the NADPH-dependent reduction of L-glutamate 5-phosphate into L-glutamate 5-semialdehyde and phosphate. The product spontaneously undergoes cyclization to form 1-pyrroline-5-carboxylate. This chain is Gamma-glutamyl phosphate reductase, found in Sulfurimonas denitrificans (strain ATCC 33889 / DSM 1251) (Thiomicrospira denitrificans (strain ATCC 33889 / DSM 1251)).